Reading from the N-terminus, the 146-residue chain is Hemoglobin subunit beta (146 aa).

A Globin domain is found at 2–146 (QWTAEEKQLI…VAHALARKYH (145 aa)). The heme b site is built by histidine 63 and histidine 92.

Belongs to the globin family. As to quaternary structure, heterotetramer of two alpha chains and two beta chains. As to expression, red blood cells.

Involved in oxygen transport from the lung to the various peripheral tissues. In Apus apus (Common swift), this protein is Hemoglobin subunit beta (HBB).